The primary structure comprises 372 residues: M protein, serotype 2.2 (372 aa).

The first 41 residues, 1–41 (MARQQTKKNYSLRKLKTGTASVAVALTVLGAGFANQTEVRA), serve as a signal peptide directing secretion. 3 C repeats span residues 124 to 158 (AKTTKENEISEASRKGLSRDLEASRTAKKELEAKH), 166 to 200 (KKLTEGNQVSEASRKGLSNDLEASRAAKKELEAKY), and 215 to 249 (QKLEADYQVSETSRKGLSRDLEASREANKKVTSEL). Basic and acidic residues-rich tracts occupy residues 125–169 (KTTK…KKLT), 226–246 (TSRKGLSRDLEASREANKKVT), and 260–274 (EESKKLSEKEKAELQ). Disordered stretches follow at residues 125 to 191 (KTTK…ASRA) and 211 to 274 (EAKH…AELQ). 4 D repeats span residues 275 to 280 (AKLDAQ), 281 to 286 (GKALKE), 289 to 294 (AKQTEE), and 296 to 301 (AKLRAE). The span at 295–304 (LAKLRAEKAA) shows a compositional bias: basic and acidic residues. A disordered region spans residues 295-344 (LAKLRAEKAAGSKTPATKPANKERSGRAAQTATRPSQNKGMRSQLPSTGE). Residues 322-341 (AAQTATRPSQNKGMRSQLPS) show a composition bias toward polar residues. An LPXTG sorting signal motif is present at residues 339 to 343 (LPSTG). Position 342 is a pentaglycyl murein peptidoglycan amidated threonine (threonine 342). Positions 343–372 (GEAANPFFTAAAATVMVSAGMLALKRKEEN) are cleaved as a propeptide — removed by sortase.

It belongs to the M protein family.

It localises to the secreted. Its subcellular location is the cell wall. Its function is as follows. This protein is one of the different antigenic serotypes of protein M. Protein M is closely associated with virulence of the bacterium and can render the organism resistant to phagocytosis. The chain is M protein, serotype 2.2 (emmL2.2) from Streptococcus pyogenes.